The chain runs to 328 residues: Probable G-protein coupled receptor 82 (328 aa).

Residues 1 to 11 (MTNNSTCIQPS) are Extracellular-facing. N-linked (GlcNAc...) asparagine glycans are attached at residues asparagine 3 and asparagine 4. Residues 12–32 (VISTTALPVTYIFLFIIGLFG) form a helical membrane-spanning segment. Residues 33–55 (NSLAQWVFLTKIGKKTSTHIYLA) are Cytoplasmic-facing. Residues 56–76 (NLVTANLLVCTAMPFMGIYFL) traverse the membrane as a helical segment. Residues 77 to 92 (RGFYWKYQSVQCRLVN) are Extracellular-facing. Residues 93–115 (FLGTLSMHVSMFVSLLILSWIAI) traverse the membrane as a helical segment. Residues 116-156 (SRYATLMKKESKQEATSCYERMFYGHVLKRFRQPNFARTMC) lie on the Cytoplasmic side of the membrane. Residues 157–177 (IYIWGVVLVIIIPVTLYYSVV) traverse the membrane as a helical segment. The Extracellular segment spans residues 178–197 (EATEEGQSQCYNRQMELGAR). The helical transmembrane segment at 198–218 (PSQIAGLIGTTFIGFSFLVVV) threads the bilayer. At 219–251 (TSYYSLVSHLRRVRTCTSITEKDLTYRSVKRHL) the chain is on the cytoplasmic side. A helical membrane pass occupies residues 252 to 272 (LIIQVLLVVCFLPYSIFKPIF). Residues 273 to 328 (YVLHQREGDCQQLNYLIEAKNILTCLASARSSTDPIIFLLLDKTFKKTLYGLLTKS) are Extracellular-facing.

The protein belongs to the G-protein coupled receptor 1 family.

The protein resides in the cell membrane. Its function is as follows. Orphan receptor. This is Probable G-protein coupled receptor 82 (Gpr82) from Mus musculus (Mouse).